The following is a 486-amino-acid chain: Portal protein (486 aa).

The segment at 456-486 (MVDADPTVPGSPSPTAPPKPQPAIESSGGDA) is disordered. Residues 464–476 (PGSPSPTAPPKPQ) are compositionally biased toward pro residues.

This sequence belongs to the SPP1-like portal protein family. Homododecamer.

The protein localises to the virion. In terms of biological role, forms the portal vertex of the capsid. This portal plays critical roles in head assembly, genome packaging, neck/tail attachment, and genome ejection. The portal protein multimerizes as a single ring-shaped homododecamer arranged around a central channel. Binds to the terminase subunits to form the packaging machine. This chain is Portal protein (14), found in Mycobacterium phage L5 (Mycobacteriophage L5).